The sequence spans 497 residues: Probable cytosol aminopeptidase (497 aa).

Lysine 265 and aspartate 270 together coordinate Mn(2+). Lysine 277 is a catalytic residue. Residues aspartate 288, aspartate 347, and glutamate 349 each coordinate Mn(2+). The active site involves arginine 351.

The protein belongs to the peptidase M17 family. The cofactor is Mn(2+).

It is found in the cytoplasm. The catalysed reaction is Release of an N-terminal amino acid, Xaa-|-Yaa-, in which Xaa is preferably Leu, but may be other amino acids including Pro although not Arg or Lys, and Yaa may be Pro. Amino acid amides and methyl esters are also readily hydrolyzed, but rates on arylamides are exceedingly low.. It carries out the reaction Release of an N-terminal amino acid, preferentially leucine, but not glutamic or aspartic acids.. Presumably involved in the processing and regular turnover of intracellular proteins. Catalyzes the removal of unsubstituted N-terminal amino acids from various peptides. This is Probable cytosol aminopeptidase from Geobacillus sp. (strain WCH70).